Consider the following 30-residue polypeptide: Cyclotide hyen-E (30 aa).

The cyclopeptide (Gly-Asn) cross-link spans 1–30 (GVPCGESCVYIPCFTGIINCSCRDKVCYNN). Cystine bridges form between C4-C20, C8-C22, and C13-C27.

This is a cyclic peptide. As to expression, detected in stems (at protein level).

Its function is as follows. Probably participates in a plant defense mechanism. Has cytotoxic activity against HUVEC cells (LC(50)= 2.17 uM) and various cancer cells including HeLa (LC(50)= 3.05 uM), MCF-7 and K562. Displays very weak hemolytic activity. Binds to and induces leakage in phospholipd membranes, particularly ones containing 1-palmitoyl-2-oleophosphatidylethanolamine (POPE). This Pigea enneasperma (Spade flower) protein is Cyclotide hyen-E.